The sequence spans 75 residues: UPF0235 protein Ava_3894 (75 aa).

Residues 1–32 are disordered; sequence MQKKVKVKPNSKQQKIAEQDDGSLTVHLKSPP.

Belongs to the UPF0235 family.

The sequence is that of UPF0235 protein Ava_3894 from Trichormus variabilis (strain ATCC 29413 / PCC 7937) (Anabaena variabilis).